Consider the following 344-residue polypeptide: Lipopolysaccharide heptosyltransferase 3 (344 aa).

It belongs to the glycosyltransferase 9 family.

The catalysed reaction is an L-alpha-D-Hep-(1-&gt;3)-4-O-phospho-L-alpha-D-Hep-(1-&gt;5)-[alpha-Kdo-(2-&gt;4)]-alpha-Kdo-(2-&gt;6)-lipid A + ADP-L-glycero-beta-D-manno-heptose = an L-alpha-D-Hep-(1-&gt;7)-L-alpha-D-Hep-(1-&gt;3)-4-O-phospho-L-alpha-D-Hep-(1-&gt;5)-[alpha-Kdo-(2-&gt;4)]-alpha-Kdo-(2-&gt;6)-lipid A + ADP + H(+). The enzyme catalyses L-alpha-D-Hep-(1-&gt;3)-4-O-phospho-L-alpha-D-Hep-(1-&gt;5)-[alpha-Kdo-(2-&gt;4)]-alpha-Kdo-(2-&gt;6)-lipid A (E. coli) + ADP-L-glycero-beta-D-manno-heptose = L-alpha-D-Hep-(1-&gt;7)-L-alpha-D-Hep-(1-&gt;3)-4-O-phospho-L-alpha-D-Hep-(1-&gt;5)-[alpha-Kdo-(2-&gt;4)]-alpha-Kdo-(2-&gt;6)-lipid A (E. coli) + ADP + H(+). The protein operates within bacterial outer membrane biogenesis; LPS core biosynthesis. Functionally, glycosyltransferase involved in the biosynthesis of the core oligosaccharide region of lipopolysaccharide (LPS). Catalyzes the addition of the third heptose unit (HepIII) to the second heptose unit (HepII) of the phospho-Hep2-Kdo2-lipid A module. The chain is Lipopolysaccharide heptosyltransferase 3 from Escherichia coli (strain K12).